We begin with the raw amino-acid sequence, 120 residues long: Large ribosomal subunit protein P3 (120 aa).

Positions 83-120 are disordered; sequence GGGGAAASGGAAAEAPKEEKKEEEKEESDDDMGFSLFD.

The protein belongs to the eukaryotic ribosomal protein P1/P2 family. Post-translationally, phosphorylated.

In terms of biological role, plays an important role in the elongation step of protein synthesis. The polypeptide is Large ribosomal subunit protein P3 (RPP3A) (Zea mays (Maize)).